The primary structure comprises 62 residues: Beta-defensin 133 (62 aa).

The signal sequence occupies residues 1-21; that stretch reads MKIHIFLFVLFFFLVPIATRG. Disulfide bonds link Cys32–Cys60 and Cys39–Cys53.

Belongs to the beta-defensin family.

The protein localises to the secreted. In terms of biological role, has antibacterial activity. The protein is Beta-defensin 133 (DEFB133) of Pan troglodytes (Chimpanzee).